The sequence spans 920 residues: KIN14B-interacting protein At4g14310 (920 aa).

The span at 1–10 (MSASTNRRRL) shows a compositional bias: basic residues. Disordered stretches follow at residues 1–199 (MSAS…EKST) and 309–375 (IDGP…EKPS). Polar residues predominate over residues 35–54 (PISSKNSNPALQKSLSSKEN). Low complexity predominate over residues 90–105 (TRSTSSGLRGRSSSPS). A compositionally biased stretch (basic and acidic residues) spans 112–135 (SDLRKRNESRVIGEKGESGQDKKS). Polar residues-rich tracts occupy residues 137-147 (LKSSGFKQGTS) and 166-184 (CPVN…NSIS). Residues 327–337 (LNKEELEDRLL) are compositionally biased toward basic and acidic residues. The segment covering 345 to 355 (SRTQSKTSSHV) has biased composition (polar residues). Residues 357–374 (KGHDSVESNKAVNAEEKP) show a composition bias toward basic and acidic residues. Residues 435–463 (TEILRANEALEEIDDEENREEMELEEIDD) are a coiled coil.

As to quaternary structure, interacts with KIN14B, CDKA-1, CKS1 and CKS2.

It is found in the cytoplasm. Functionally, might be involved in division plane determination. This Arabidopsis thaliana (Mouse-ear cress) protein is KIN14B-interacting protein At4g14310.